A 604-amino-acid polypeptide reads, in one-letter code: UvrABC system protein C (604 aa).

Positions 14-91 (ESPGVYRMLD…IKEQRPPYNI (78 aa)) constitute a GIY-YIG domain. Positions 202–237 (EQVTAQLTRDMETASQALDFEEAARLRDQIQQLRRL) constitute a UVR domain. The segment at 538-557 (GHRQQRDKQRRTSTLQDIPG) is disordered.

It belongs to the UvrC family. As to quaternary structure, interacts with UvrB in an incision complex.

The protein resides in the cytoplasm. In terms of biological role, the UvrABC repair system catalyzes the recognition and processing of DNA lesions. UvrC both incises the 5' and 3' sides of the lesion. The N-terminal half is responsible for the 3' incision and the C-terminal half is responsible for the 5' incision. The sequence is that of UvrABC system protein C from Chromohalobacter salexigens (strain ATCC BAA-138 / DSM 3043 / CIP 106854 / NCIMB 13768 / 1H11).